Consider the following 291-residue polypeptide: MTSATIPAHAELILPAPAKLNLMLHILGRRADGYHQLQTLFQFLDHGDELGFSVRQDGEIRLHTPIDGVPHASNLIVRAAKRLQEASGTTLGADIWLDKRLPMGGGIGGGSSDAATTLLGLDHLWHTRLGEDRLAEIGLALGADVPVFVRGRAAFAEGVGELLTPVELEEPWFLVAVPQVFVSTAEVFGAPELTRDTPPIKVRSLLAGGGRNDCQPVVEKRYPEVRNALILLNKFVSARLTGTGACIFGSFPNRDDADKVARQLPGTLPSFVAQGRNISMLHRRLQALAKK.

Residue K19 is part of the active site. An ATP-binding site is contributed by P102–S112. Residue D144 is part of the active site.

This sequence belongs to the GHMP kinase family. IspE subfamily.

The enzyme catalyses 4-CDP-2-C-methyl-D-erythritol + ATP = 4-CDP-2-C-methyl-D-erythritol 2-phosphate + ADP + H(+). The protein operates within isoprenoid biosynthesis; isopentenyl diphosphate biosynthesis via DXP pathway; isopentenyl diphosphate from 1-deoxy-D-xylulose 5-phosphate: step 3/6. Its function is as follows. Catalyzes the phosphorylation of the position 2 hydroxy group of 4-diphosphocytidyl-2C-methyl-D-erythritol. This is 4-diphosphocytidyl-2-C-methyl-D-erythritol kinase from Ectopseudomonas mendocina (strain ymp) (Pseudomonas mendocina).